The following is a 203-amino-acid chain: Glycerol-3-phosphate acyltransferase (203 aa).

Helical transmembrane passes span L10–M30, L60–A80, A88–F108, L118–I138, and F162–L182.

This sequence belongs to the PlsY family. Probably interacts with PlsX.

Its subcellular location is the cell inner membrane. The catalysed reaction is an acyl phosphate + sn-glycerol 3-phosphate = a 1-acyl-sn-glycero-3-phosphate + phosphate. It functions in the pathway lipid metabolism; phospholipid metabolism. Its function is as follows. Catalyzes the transfer of an acyl group from acyl-phosphate (acyl-PO(4)) to glycerol-3-phosphate (G3P) to form lysophosphatidic acid (LPA). This enzyme utilizes acyl-phosphate as fatty acyl donor, but not acyl-CoA or acyl-ACP. This chain is Glycerol-3-phosphate acyltransferase, found in Jannaschia sp. (strain CCS1).